Here is a 453-residue protein sequence, read N- to C-terminus: MQDTTLKKIIQDKSEWIRLRKEKQPLIDFKDKINKKTRDFYHSLKEKKPCFILEYKKKSPSLGIIRNNFNLIEISNVYKKYASSVSVLTDEKYFHGNLNFINIVRECVSQPVLCKDFFIDPYQVYLSRYYNADAILLMLSVLNDIQYKELSIIAKKLNMGILTEVNNIEELKRALKLNANIIGINNRNLHDLSIDLNRTRTLSSLIKKDTIIISESGIKKYREIKELSKFVNGFLIGSHLMSQTNLETAVRSIIFGDNKVCGLTRSIDIEVSEKYGAIYGGLIFVKNSPRYITKKTAKNISINRKLKLIGIFQNENINIIVDIAEELSLYGVQLHGQENKQYIDKLRNILPKKINIWKAFSIQSELPDRNWDNVNMYIFDSDSGGSNTSFNWSILNHHILDNVILAGGINLKNCITASKLKCSGLDLNSGVEISPGIKDYKKIKSIFQKLRYG.

The indole-3-glycerol phosphate synthase stretch occupies residues 1–257 (MQDTTLKKII…TAVRSIIFGD (257 aa)). The interval 258 to 453 (NKVCGLTRSI…KSIFQKLRYG (196 aa)) is N-(5'-phosphoribosyl)anthranilate isomerase.

In the N-terminal section; belongs to the TrpC family. The protein in the C-terminal section; belongs to the TrpF family. Monomer.

The enzyme catalyses N-(5-phospho-beta-D-ribosyl)anthranilate = 1-(2-carboxyphenylamino)-1-deoxy-D-ribulose 5-phosphate. The catalysed reaction is 1-(2-carboxyphenylamino)-1-deoxy-D-ribulose 5-phosphate + H(+) = (1S,2R)-1-C-(indol-3-yl)glycerol 3-phosphate + CO2 + H2O. It participates in amino-acid biosynthesis; L-tryptophan biosynthesis; L-tryptophan from chorismate: step 3/5. Its pathway is amino-acid biosynthesis; L-tryptophan biosynthesis; L-tryptophan from chorismate: step 4/5. Its function is as follows. Bifunctional enzyme that catalyzes two sequential steps of tryptophan biosynthetic pathway. The first reaction is catalyzed by the isomerase, coded by the TrpF domain; the second reaction is catalyzed by the synthase, coded by the TrpC domain. This chain is Tryptophan biosynthesis protein TrpCF (trpC), found in Buchnera aphidicola subsp. Acyrthosiphon pisum (strain APS) (Acyrthosiphon pisum symbiotic bacterium).